A 646-amino-acid polypeptide reads, in one-letter code: Galactofuranosyltransferase GlfT2 (646 aa).

Residues arginine 182, glutamine 211, asparagine 240, and aspartate 267 each contribute to the UDP-alpha-D-galactofuranose site. Residues aspartate 267 and aspartate 269 each coordinate Mn(2+). The active-site Proton acceptor is aspartate 384. Mn(2+) is bound at residue histidine 408.

This sequence belongs to the glycosyltransferase 2 family. As to quaternary structure, homotetramer. Mn(2+) is required as a cofactor. It depends on Mg(2+) as a cofactor.

The protein localises to the cell membrane. The enzyme catalyses beta-D-galactofuranosyl-(1-&gt;5)-beta-D-galactofuranosyl-(1-&gt;4)-alpha-L-rhamnosyl-(1-&gt;3)-N-acetyl-alpha-D-glucosaminyl-diphospho-trans,octa-cis-decaprenol + 28 UDP-alpha-D-galactofuranose = [beta-D-galactofuranosyl-(1-&gt;5)-beta-D-galactofuranosyl-(1-&gt;6)]14-beta-D-galactofuranosyl-(1-&gt;5)-beta-D-galactofuranosyl-(1-&gt;4)-alpha-L-rhamnopyranosyl-(1-&gt;3)-N-acetyl-alpha-D-glucosaminyl-diphospho-trans,octa-cis-decaprenol + 28 UDP + 28 H(+). It participates in cell wall biogenesis; cell wall polysaccharide biosynthesis. Functionally, involved in the galactan polymerization of the arabinogalactan (AG) region of the mycolylarabinogalactan-peptidoglycan (mAGP) complex, an essential component of the mycobacteria cell wall. Thus, successively transfers approximately 28 galactofuranosyl (Galf) residues from UDP-galactofuranose (UDP-Galf) onto the galactofuranosyl-galactofuranosyl-rhamnosyl-GlcNAc-diphospho-decaprenol (Galf-Galf-Rha-GlcNAc-PP-C50) acceptor produced by GlfT1, with alternating 1-&gt;5 and 1-&gt;6 links, forming a galactan domain with approximately 30 galactofuranosyl residues. The protein is Galactofuranosyltransferase GlfT2 of Mycolicibacterium smegmatis (strain ATCC 700084 / mc(2)155) (Mycobacterium smegmatis).